A 356-amino-acid chain; its full sequence is Syntaxin-7A (356 aa).

Residues 1 to 333 are Cytoplasmic-facing; it reads MYNNNNNFGG…NQKSSRNKMC (333 aa). Composition is skewed to low complexity over residues 32 to 74 and 207 to 224; these read NNNN…FDNN and NNNS…NNQQ. Disordered stretches follow at residues 32-88 and 187-247; these read NNNN…NSDY and EKTT…RRQQ. Residues 233–244 show a composition bias toward basic and acidic residues; sequence EDEHQSLMESSR. Residues 259–321 enclose the t-SNARE coiled-coil homology domain; sequence NSIIQERDEG…KEGVNHLREA (63 aa). The helical; Anchor for type IV membrane protein transmembrane segment at 334 to 354 threads the bilayer; it reads WIVLILLIVCAVLGVILFFTL. The Vesicular portion of the chain corresponds to 355 to 356; the sequence is RK.

It belongs to the syntaxin family. In terms of assembly, component of the SNARE complex composed of syn7A, syn8A, vamp7A and vti1A. Interacts with nsfA, snpA and snpC.

The protein localises to the endosome membrane. Functionally, involved in the targeting and/or fusion of transport vesicles to their target membrane during transport of proteins from the early endosome to the lysosome. Required for fusion of late endosomes with lysosomes and homotypic lysosomal fusion. May be involved in protein trafficking from the plasma membrane to the early endosome (EE) as well as in homotypic fusion of endocytic organelles. This is Syntaxin-7A from Dictyostelium discoideum (Social amoeba).